A 127-amino-acid polypeptide reads, in one-letter code: Probable 4-amino-4-deoxy-L-arabinose-phosphoundecaprenol flippase subunit ArnF (127 aa).

A helical membrane pass occupies residues 1 to 21; the sequence is MMGYFWALMSVLLVSGAQLMM. At 22–48 the chain is on the periplasmic side; that stretch reads KWAMVSLPPVGQTDALMSAFMSVTPGA. A helical transmembrane segment spans residues 49 to 69; that stretch reads VALVIGLFAYVFSMGCWYMAL. The Cytoplasmic segment spans residues 70 to 77; the sequence is RRIALSKA. The chain crosses the membrane as a helical span at residues 78–98; sequence YPLLSLSYVLVWAAAIGLPWL. The Periplasmic segment spans residues 99–101; it reads HEP. A helical membrane pass occupies residues 102–122; it reads FSVGKLAGVSVIFVGLLLVCL. The Cytoplasmic portion of the chain corresponds to 123-127; sequence PDKKS.

Belongs to the ArnF family. As to quaternary structure, heterodimer of ArnE and ArnF.

It is found in the cell inner membrane. Its pathway is bacterial outer membrane biogenesis; lipopolysaccharide biosynthesis. Its function is as follows. Translocates 4-amino-4-deoxy-L-arabinose-phosphoundecaprenol (alpha-L-Ara4N-phosphoundecaprenol) from the cytoplasmic to the periplasmic side of the inner membrane. The sequence is that of Probable 4-amino-4-deoxy-L-arabinose-phosphoundecaprenol flippase subunit ArnF from Enterobacter sp. (strain 638).